The following is a 142-amino-acid chain: Hemoglobin subunit alpha (142 aa).

Ser1 is modified (N-acetylserine). One can recognise a Globin domain in the interval 1-142; sequence SLSDKDKADV…LALALGQKYR (142 aa). An O2-binding site is contributed by His58. A heme b-binding site is contributed by His88.

Belongs to the globin family. Heterotetramer of two alpha chains and two beta chains. Red blood cells.

Its function is as follows. Involved in oxygen transport from gills to the various peripheral tissues. This Catostomus clarkii (Desert sucker) protein is Hemoglobin subunit alpha (hba).